Here is a 261-residue protein sequence, read N- to C-terminus: Single-strand annealing weakened protein 1 (261 aa).

In terms of assembly, interacts with MSH2, MSH3, RAD1, RAD10, RAD51 and RAD52.

Its subcellular location is the nucleus. Its function is as follows. Catalyzes 3'-non-homologous tail removal of RAD1/RAD10-dependent single-strand annealing recombination intermediates. Plays a key role in targeting RAD1/RAD10 complex to 3'-flap cleavage substrate in recombination. Also contributes to the integrity of ribosomal DNA arrays. This is Single-strand annealing weakened protein 1 (SAW1) from Saccharomyces cerevisiae (strain ATCC 204508 / S288c) (Baker's yeast).